Consider the following 86-residue polypeptide: Small ribosomal subunit protein bS18 (86 aa).

Belongs to the bacterial ribosomal protein bS18 family. In terms of assembly, part of the 30S ribosomal subunit. Forms a tight heterodimer with protein bS6.

Functionally, binds as a heterodimer with protein bS6 to the central domain of the 16S rRNA, where it helps stabilize the platform of the 30S subunit. The sequence is that of Small ribosomal subunit protein bS18 from Herpetosiphon aurantiacus (strain ATCC 23779 / DSM 785 / 114-95).